A 1196-amino-acid chain; its full sequence is Homeodomain-interacting protein kinase 2 (1196 aa).

Position 16 is a phosphoserine (Ser16). Lys32 participates in a covalent cross-link: Glycyl lysine isopeptide (Lys-Gly) (interchain with G-Cter in SUMO); alternate. Lys32 is covalently cross-linked (Glycyl lysine isopeptide (Lys-Gly) (interchain with G-Cter in SUMO2); alternate). A disordered region spans residues 50-69 (VYSQSKNIPPSQPASTTVST). The tract at residues 97-230 (SASSTSVTGQ…TNEIVAIKIL (134 aa)) is transcriptional corepression. A phosphoserine mark is found at Ser118 and Ser135. Thr141 carries the phosphothreonine modification. Positions 189 to 520 (HEVLCSMTNT…DADKRVTPIE (332 aa)) are interaction with DAXX. Residues 199–527 (YEVLEFLGRG…PIETLNHPFV (329 aa)) enclose the Protein kinase domain. ATP-binding positions include 205 to 213 (LGRGTFGQV) and Lys228. Residues Thr252 and Thr273 each carry the phosphothreonine modification. The active-site Proton acceptor is the Asp324. Tyr361 is modified (phosphotyrosine; by autocatalysis). Position 441 is a phosphoserine (Ser441). Residues Thr482, Thr517, and Thr566 each carry the phosphothreonine modification. An interaction with SKI and SMAD1 region spans residues 539 to 844 (AHVKSCFQNM…KENTPPRCAM (306 aa)). The segment at 600–800 (SATLSLANPE…MRQQPTSTTS (201 aa)) is interaction with DAZAP2. Residues Ser634 and Ser668 each carry the phosphoserine modification. Phosphothreonine is present on Thr687. An interaction with POU4F1 region spans residues 752–897 (RNTHAHGSHY…ITISSDTDEE (146 aa)). Residues 774 to 876 (HVTLPAAQPL…TRERQRQTIV (103 aa)) form an interaction with CTBP1 region. The segment at 787–897 (VAHVMRQQPT…ITISSDTDEE (111 aa)) is interaction with HMGA1. 2 disordered regions span residues 792-847 (RQQP…MVHS) and 891-963 (SSDT…CTGN). A compositionally biased stretch (polar residues) spans 793 to 829 (QQPTSTTSSRKSKQHQSSVRNVSTCEVTSSQAISSPQ). The Nuclear localization signal 1 (NLS1) motif lies at 802–805 (RKSK). 2 positions are modified to phosphoserine: Ser815 and Ser827. The Nuclear localization signal 2 (NLS2) signature appears at 832–835 (KRVK). The tract at residues 839 to 934 (PPRCAMVHSS…PYSDSSSNTS (96 aa)) is interaction with TP53 and TP73. Residues 873–907 (QTIVIPDTPSPTVSVITISSDTDEEEEQKHAPTST) form an interaction with UBE2I region. Positions 873–980 (QTIVIPDTPS…PLKTQASEVL (108 aa)) are localization to nuclear speckles. The required for localization to nuclear speckles stretch occupies residues 873-980 (QTIVIPDTPS…PLKTQASEVL (108 aa)). Residues 884–908 (TVSVITISSDTDEEEEQKHAPTSTV) form an SUMO interaction motifs (SIM); required for nuclear localization and kinase activity region. Residues 923–937 (DSPYSDSSSNTSPYS) show a composition bias toward low complexity. Ser934 carries the post-translational modification Phosphoserine. An interaction with AXIN1 region spans residues 935–1050 (PYSVQQRTGH…LSQAQQHMAA (116 aa)). Polar residues predominate over residues 938–951 (VQQRTGHNGTNTLD). Glycyl lysine isopeptide (Lys-Gly) (interchain with G-Cter in SUMO2) cross-links involve residues Lys953 and Lys973. Residues 984-1196 (DSLGPAISAS…PAKVNQYPYI (213 aa)) are autoinhibitory domain (AID). 5 positions are modified to phosphoserine: Ser991, Ser993, Ser1042, Ser1153, and Ser1186. A compositionally biased stretch (low complexity) spans 991–1046 (SASHHSSSFKSKSSSTVTSTSGHSSGSSSGAIAYRQQRPGPHFQQQQPLNLSQAQQ). The disordered stretch occupies residues 991–1058 (SASHHSSSFK…AADRTGSHRR (68 aa)). A Glycyl lysine isopeptide (Lys-Gly) (interchain with G-Cter in SUMO) cross-link involves residue Lys1189.

This sequence belongs to the protein kinase superfamily. CMGC Ser/Thr protein kinase family. HIPK subfamily. As to quaternary structure, interacts with CREB1, SIAH1, WSB1, CBX4, TRADD, p53/TP53, TP73, TP63, CREBBP, DAXX, P53DINP1, SKI, SMAD1, SMAD2 and SMAD3, but not SMAD4. Interacts with SP100; positively regulates TP53-dependent transcription. Interacts with ATF1, PML, RUNX1, EP300, NKX1-2, NKX2-5, UBE2I, HMGA1, CTBP1, AXIN1, NLK, MYB, POU4F1, POU4F2, POU4F3, UBE2I, UBL1 and ZBTB4. Probably part of a complex consisting of p53/TP53, HIPK2 and AXIN1. Interacts with DAZAP2; the interaction results in phosphorylation of DAZAP2 which causes localization of DAZAP2 to the nucleus, reduces interaction of DAZAP2 with HIPK2 and prevents DAZAP2-dependent degradation of HIPK2. Interacts with SIAH1; the interaction is promoted by DAZAP2 and results in SIAH1-mediated ubiquitination and subsequent proteasomal degradation of HIPK2. Interacts with SPN/CD43 cytoplasmic tail. In terms of processing, sumoylated. When conjugated it is directed to nuclear speckles. Desumoylated by SENP1. Sumoylation on Lys-32 is promoted by the E3 SUMO-protein ligase CBX4. Post-translationally, autophosphorylation at Tyr-361 in the activation loop activates the kinase and promotes nuclear localization. Ubiquitinated by FBXO3, WSB1 and SIAH1, leading to rapid proteasome-dependent degradation. The degradation mediated by FBXO3, but not ubiquitination, is prevented in the presence of PML. The degradation mediated by WSB1 and SIAH1 is reversibly reduced upon DNA damage. In terms of processing, cleaved at Asp-923 and Asp-984 by CASP6 in a p53/TP53-dependent manner. The cleaved form lacks the autoinhibitory C-terminal domain (AID), resulting in a hyperactive kinase, which potentiates p53/TP53 Ser-46 phosphorylation and subsequent activation of the cell death machinery. As to expression, ubiquitous. Abundant in muscle, heart, small intestine, stomach, kidney and brain; and low in testis, skin and lung.

Its subcellular location is the nucleus. The protein localises to the PML body. It is found in the cytoplasm. It catalyses the reaction L-seryl-[protein] + ATP = O-phospho-L-seryl-[protein] + ADP + H(+). The enzyme catalyses L-threonyl-[protein] + ATP = O-phospho-L-threonyl-[protein] + ADP + H(+). Its function is as follows. Serine/threonine-protein kinase involved in transcription regulation, p53/TP53-mediated cellular apoptosis and regulation of the cell cycle. Acts as a corepressor of several transcription factors, including SMAD1 and POU4F1/Brn3a and probably NK homeodomain transcription factors. Phosphorylates PDX1, ATF1, PML, p53/TP53, CREB1, CTBP1, CBX4, RUNX1, EP300, CTNNB1, HMGA1, ZBTB4 and DAZAP2. Inhibits cell growth and promotes apoptosis through the activation of p53/TP53 both at the transcription level and at the protein level (by phosphorylation and indirect acetylation). The phosphorylation of p53/TP53 may be mediated by a p53/TP53-HIPK2-AXIN1 complex. Involved in the response to hypoxia by acting as a transcriptional co-suppressor of HIF1A. Mediates transcriptional activation of TP73. In response to TGFB, cooperates with DAXX to activate JNK. Negative regulator through phosphorylation and subsequent proteasomal degradation of CTNNB1 and the antiapoptotic factor CTBP1. In the Wnt/beta-catenin signaling pathway acts as an intermediate kinase between MAP3K7/TAK1 and NLK to promote the proteasomal degradation of MYB. Phosphorylates CBX4 upon DNA damage and promotes its E3 SUMO-protein ligase activity. Activates CREB1 and ATF1 transcription factors by phosphorylation in response to genotoxic stress. In response to DNA damage, stabilizes PML by phosphorylation. PML, HIPK2 and FBXO3 may act synergically to activate p53/TP53-dependent transactivation. Promotes angiogenesis, and is involved in erythroid differentiation, especially during fetal liver erythropoiesis. Phosphorylation of RUNX1 and EP300 stimulates EP300 transcription regulation activity. Triggers ZBTB4 protein degradation in response to DNA damage. In response to DNA damage, phosphorylates DAZAP2 which localizes DAZAP2 to the nucleus, reduces interaction of DAZAP2 with HIPK2 and prevents DAZAP2-dependent ubiquitination of HIPK2 by E3 ubiquitin-protein ligase SIAH1 and subsequent proteasomal degradation. Modulates HMGA1 DNA-binding affinity. In response to high glucose, triggers phosphorylation-mediated subnuclear localization shifting of PDX1. Involved in the regulation of eye size, lens formation and retinal lamination during late embryogenesis. In Mus musculus (Mouse), this protein is Homeodomain-interacting protein kinase 2 (Hipk2).